A 347-amino-acid polypeptide reads, in one-letter code: 4-hydroxythreonine-4-phosphate dehydrogenase (347 aa).

Positions 137 and 138 each coordinate substrate. 3 residues coordinate a divalent metal cation: His174, His219, and His274. Lys282, Asn291, and Arg300 together coordinate substrate.

The protein belongs to the PdxA family. Homodimer. Zn(2+) serves as cofactor. Requires Mg(2+) as cofactor. Co(2+) is required as a cofactor.

The protein resides in the cytoplasm. The catalysed reaction is 4-(phosphooxy)-L-threonine + NAD(+) = 3-amino-2-oxopropyl phosphate + CO2 + NADH. The protein operates within cofactor biosynthesis; pyridoxine 5'-phosphate biosynthesis; pyridoxine 5'-phosphate from D-erythrose 4-phosphate: step 4/5. Catalyzes the NAD(P)-dependent oxidation of 4-(phosphooxy)-L-threonine (HTP) into 2-amino-3-oxo-4-(phosphooxy)butyric acid which spontaneously decarboxylates to form 3-amino-2-oxopropyl phosphate (AHAP). The polypeptide is 4-hydroxythreonine-4-phosphate dehydrogenase (Cupriavidus pinatubonensis (strain JMP 134 / LMG 1197) (Cupriavidus necator (strain JMP 134))).